A 276-amino-acid chain; its full sequence is 1H-3-hydroxy-4-oxoquinaldine 2,4-dioxygenase (276 aa).

One can recognise an AB hydrolase-1 domain in the interval 28–150; that stretch reads PAILLLPGWC…TLLKDPERWR (123 aa). Residues 36–38, 100–101, and Trp160 each bind substrate; these read WCH and HS. His251 functions as the Proton donor/acceptor in the catalytic mechanism.

Belongs to the AB hydrolase superfamily. None. Contrary to most other dioxygenases, this enzyme does not require a cofactor for catalysis. serves as cofactor.

It carries out the reaction 3-hydroxy-2-methyl-1H-quinolin-4-one + O2 = N-acetylanthranilate + CO + H(+). Ring-cleaving dioxygenase involved in quinaldine degradation and utilization. The protein is 1H-3-hydroxy-4-oxoquinaldine 2,4-dioxygenase (hod) of Paenarthrobacter nitroguajacolicus (Arthrobacter nitroguajacolicus).